A 414-amino-acid chain; its full sequence is DNA primase small subunit PriS (414 aa).

Catalysis depends on residues aspartate 98, aspartate 100, and aspartate 312.

The protein belongs to the eukaryotic-type primase small subunit family. As to quaternary structure, heterodimer of a small subunit (PriS) and a large subunit (PriL). Mg(2+) is required as a cofactor. It depends on Mn(2+) as a cofactor.

Functionally, catalytic subunit of DNA primase, an RNA polymerase that catalyzes the synthesis of short RNA molecules used as primers for DNA polymerase during DNA replication. The small subunit contains the primase catalytic core and has DNA synthesis activity on its own. Binding to the large subunit stabilizes and modulates the activity, increasing the rate of DNA synthesis while decreasing the length of the DNA fragments, and conferring RNA synthesis capability. The DNA polymerase activity may enable DNA primase to also catalyze primer extension after primer synthesis. May also play a role in DNA repair. The protein is DNA primase small subunit PriS of Methanosarcina barkeri (strain Fusaro / DSM 804).